Reading from the N-terminus, the 214-residue chain is Putative glucose-6-phosphate isomerase 1 (214 aa).

Positions 92, 94, 101, and 140 each coordinate Fe cation.

The protein belongs to the archaeal-type GPI family. In terms of assembly, homodimer. Requires Fe cation as cofactor.

It is found in the cytoplasm. The enzyme catalyses alpha-D-glucose 6-phosphate = beta-D-fructose 6-phosphate. The protein operates within carbohydrate degradation; glycolysis; D-glyceraldehyde 3-phosphate and glycerone phosphate from D-glucose: step 2/4. This chain is Putative glucose-6-phosphate isomerase 1 (pgiA1), found in Rhizobium meliloti (strain 1021) (Ensifer meliloti).